The primary structure comprises 1009 residues: DENN domain-containing protein 1A (1009 aa).

One can recognise a uDENN domain in the interval 13–145; it reads FEVYVEVAYP…HKLPIPDPGV (133 aa). Positions 162–298 constitute a cDENN domain; that stretch reads ELPSIPENRN…VISSLKNRLK (137 aa). Residues 300-378 form the dDENN domain; sequence VSTTTGDGVA…DGRLDLLNSG (79 aa). The FXDXF motif motif lies at 381-385; it reads FSDVF. The segment at 453 to 564 is disordered; that stretch reads DIAENGCAPT…TGPVPAPPDR (112 aa). Ser473 carries the post-translational modification Phosphoserine. Basic and acidic residues predominate over residues 477–489; it reads EAKDPKLREDRRP. Basic residues predominate over residues 500–509; that stretch reads PRPHVVKRPK. Thr519 carries the phosphothreonine modification. A phosphoserine mark is found at Ser520, Ser523, Ser536, Ser538, and Ser546. Positions 569–578 match the Clathrin box motif; that stretch reads DLLEDVFSNL. Phosphoserine is present on Ser592. The tract at residues 648–714 is disordered; sequence IPSKPPAASP…RKTPELGIVP (67 aa). At Ser749 the chain carries Phosphoserine. Disordered stretches follow at residues 796 to 831 and 928 to 1009; these read STLP…QPPL and RSSA…ETFE. 2 stretches are compositionally biased toward pro residues: residues 820 to 831 and 945 to 957; these read AGTPTPFPQPPL and GDPP…PPQG. Basic and acidic residues predominate over residues 972–983; that stretch reads DPFEDLLQKTKQ. Over residues 986 to 997 the composition is skewed to low complexity; it reads SPSPALAPAPDS. Residues 999 to 1009 are compositionally biased toward basic and acidic residues; the sequence is EQLRKQWETFE.

Interacts with RAB35. Interacts with clathrin and with the adapter protein complex 2, AP-2. Interacts with ITSN1 and SH3GL2. Interacts (when phosphorylated) with YWHAE. Phosphorylated on serine and/or threonine in an Akt-dependent manner. Phosphorylation probably regulates the guanine nucleotide exchange factor (GEF) activity, possibly by disrupting an intramolecular interaction between the DENN domain and the C-terminus of the protein, thereby relieving the autoinhibition.

Its subcellular location is the cytoplasmic vesicle. The protein localises to the clathrin-coated vesicle membrane. The protein resides in the presynaptic cell membrane. With respect to regulation, the guanine nucleotide exchange factor (GEF) activity is autoinhibited. Autoinhibition may be the result of intramolecular interaction between the DENN domain and the C-terminus, which is disrupted upon phosphorylation. Activation is regulated by Akt activation. In terms of biological role, guanine nucleotide exchange factor (GEF) regulating clathrin-mediated endocytosis through RAB35 activation. Promotes the exchange of GDP to GTP, converting inactive GDP-bound RAB35 into its active GTP-bound form. Regulates clathrin-mediated endocytosis of synaptic vesicles and mediates exit from early endosomes. Binds phosphatidylinositol-phosphates (PtdInsPs), with some preference for PtdIns(3)P. The chain is DENN domain-containing protein 1A from Homo sapiens (Human).